A 76-amino-acid polypeptide reads, in one-letter code: Acyl carrier protein (76 aa).

Residues 1–76 form the Carrier domain; sequence MDTFESVKAV…DVVAYIEANK (76 aa). The residue at position 36 (Ser-36) is an O-(pantetheine 4'-phosphoryl)serine.

The protein belongs to the acyl carrier protein (ACP) family. Post-translationally, 4'-phosphopantetheine is transferred from CoA to a specific serine of apo-ACP by AcpS. This modification is essential for activity because fatty acids are bound in thioester linkage to the sulfhydryl of the prosthetic group.

The protein resides in the cytoplasm. Its pathway is lipid metabolism; fatty acid biosynthesis. Its function is as follows. Carrier of the growing fatty acid chain in fatty acid biosynthesis. This is Acyl carrier protein from Helicobacter hepaticus (strain ATCC 51449 / 3B1).